Here is a 300-residue protein sequence, read N- to C-terminus: Pleckstrin homology domain-containing family A member 3 (300 aa).

Residues M1–A93 form the PH domain. Residues M1–T100 form an interaction with SACM1L region. The segment at D97–S300 is interaction with VAPA and VAPB. A disordered region spans residues P197 to S300. 2 positions are modified to phosphoserine: S236 and S244. The span at E279 to E290 shows a compositional bias: basic and acidic residues.

Interacts with GTP-bound ARF1. Interacts with SACM1L and VAPA and/or VAPB to form a ternary complex. Widely expressed.

It localises to the golgi apparatus. The protein localises to the trans-Golgi network membrane. Its function is as follows. Plays a role in regulation of vesicular cargo transport from the trans-Golgi network (TGN) to the plasma membrane. Regulates Golgi phosphatidylinositol 4-phosphate (PtdIns(4)P) levels and activates the PtdIns(4)P phosphatase activity of SACM1L when it binds PtdIns(4)P in 'trans' configuration. Binds preferentially to PtdIns(4)P. Negatively regulates APOB secretion from hepatocytes. The chain is Pleckstrin homology domain-containing family A member 3 (PLEKHA3) from Homo sapiens (Human).